The sequence spans 126 residues: Fluoride-specific ion channel FluC 2 (126 aa).

A run of 4 helical transmembrane segments spans residues 11 to 31 (IFLIGAGGFLGAICRFSLCEL), 43 to 63 (VLGSFMLGLIMYDTEYIGFIG), 69 to 89 (AFGTGFMGAFTTFSTFAVQSF), and 93 to 113 (FFPALENISVNLFLALVGVFM). Residues glycine 76 and threonine 79 each contribute to the Na(+) site.

This sequence belongs to the fluoride channel Fluc/FEX (TC 1.A.43) family.

The protein localises to the cell membrane. The enzyme catalyses fluoride(in) = fluoride(out). Na(+) is not transported, but it plays an essential structural role and its presence is essential for fluoride channel function. Functionally, fluoride-specific ion channel. Important for reducing fluoride concentration in the cell, thus reducing its toxicity. The polypeptide is Fluoride-specific ion channel FluC 2 (Methanosarcina barkeri (strain Fusaro / DSM 804)).